Here is a 94-residue protein sequence, read N- to C-terminus: Large ribosomal subunit protein eL33 (94 aa).

Belongs to the eukaryotic ribosomal protein eL33 family.

This Aeropyrum pernix (strain ATCC 700893 / DSM 11879 / JCM 9820 / NBRC 100138 / K1) protein is Large ribosomal subunit protein eL33.